Here is a 39-residue protein sequence, read N- to C-terminus: Potassium channel toxin alpha-KTx 2.24 (39 aa).

Disulfide bonds link cysteine 7/cysteine 29, cysteine 13/cysteine 34, and cysteine 17/cysteine 36.

Belongs to the short scorpion toxin superfamily. Potassium channel inhibitor family. Alpha-KTx 02 subfamily. In terms of tissue distribution, expressed by the venom gland.

It localises to the secreted. Functionally, blocks human voltage-gated potassium (Kv) channels Kv1.1/KCNA, Kv1.2/KCNA2 and Kv1.3/KCNA3. Exhibits high affinity for Kv1.2/KCNA2 and selectivity over Kv1.1/KCNA and Kv1.3/KCNA3. The sequence is that of Potassium channel toxin alpha-KTx 2.24 from Centruroides bonito (Scorpion).